The following is a 362-amino-acid chain: UDP-galactose transporter homolog 1 (362 aa).

A run of 5 helical transmembrane segments spans residues 7 to 27 (IFPV…WALV), 45 to 65 (CPNV…YFYM), 111 to 131 (LTYM…HLII), 141 to 161 (SVVA…GSKG), and 175 to 195 (FFQK…DGLT). A glycan (N-linked (GlcNAc...) asparagine) is linked at Asn-196. A run of 4 helical transmembrane segments spans residues 234 to 254 (HMMF…LLVI), 271 to 291 (IIVS…CFIF), 296 to 316 (LYGS…SMLL), and 317 to 337 (SIIV…VIVF).

This sequence belongs to the nucleotide-sugar transporter family. SLC35B subfamily.

The protein localises to the endoplasmic reticulum membrane. In terms of biological role, may be involved in specific transport of UDP-Gal from the cytosol to the Golgi lumen. Involved in the maintenance of optimal conditions for the folding of secretory pathway proteins in the endoplasmic reticulum. This is UDP-galactose transporter homolog 1 (HUT1) from Candida glabrata (strain ATCC 2001 / BCRC 20586 / JCM 3761 / NBRC 0622 / NRRL Y-65 / CBS 138) (Yeast).